A 164-amino-acid chain; its full sequence is Two-component response regulator ARR16 (164 aa).

Positions 30-160 (HVLAVDDNLI…DVEKLKCHLM (131 aa)) constitute a Response regulatory domain. 4-aspartylphosphate is present on aspartate 93.

Belongs to the ARR family. Type-A subfamily. In terms of processing, two-component system major event consists of a His-to-Asp phosphorelay between a sensor histidine kinase (HK) and a response regulator (RR). In plants, the His-to-Asp phosphorelay involves an additional intermediate named Histidine-containing phosphotransfer protein (HPt). This multistep phosphorelay consists of a His-Asp-His-Asp sequential transfer of a phosphate group between first a His and an Asp of the HK protein, followed by the transfer to a conserved His of the HPt protein and finally the transfer to an Asp in the receiver domain of the RR protein.

The protein resides in the nucleus. Its function is as follows. Functions as a response regulator involved in His-to-Asp phosphorelay signal transduction system. Phosphorylation of the Asp residue in the receiver domain activates the ability of the protein to promote the transcription of target genes. Type-A response regulators seem to act as negative regulators of the cytokinin signaling. This is Two-component response regulator ARR16 (ARR16) from Arabidopsis thaliana (Mouse-ear cress).